Reading from the N-terminus, the 25-residue chain is Pregnancy-associated glycoprotein 59g (25 aa).

Asparagine 4 carries an N-linked (GlcNAc...) asparagine glycan.

Belongs to the peptidase A1 family. Highly expressed in the placenta between day 60 and day 100 of gestation.

The protein localises to the secreted. It localises to the extracellular space. This is Pregnancy-associated glycoprotein 59g from Ovis aries (Sheep).